The primary structure comprises 345 residues: Ferrochelatase (345 aa).

Residues histidine 215 and glutamate 296 each coordinate Fe cation.

Belongs to the ferrochelatase family.

It is found in the cytoplasm. The catalysed reaction is heme b + 2 H(+) = protoporphyrin IX + Fe(2+). It functions in the pathway porphyrin-containing compound metabolism; protoheme biosynthesis; protoheme from protoporphyrin-IX: step 1/1. Functionally, catalyzes the ferrous insertion into protoporphyrin IX. In Rhodopseudomonas palustris (strain BisA53), this protein is Ferrochelatase.